Reading from the N-terminus, the 152-residue chain is Small ribosomal subunit protein uS13 (152 aa).

The protein belongs to the universal ribosomal protein uS13 family. Component of the small ribosomal subunit.

It localises to the cytoplasm. Component of the small ribosomal subunit. The ribosome is a large ribonucleoprotein complex responsible for the synthesis of proteins in the cell. Plays an essential role in early embryonic development. The sequence is that of Small ribosomal subunit protein uS13 (rps18) from Danio rerio (Zebrafish).